Consider the following 179-residue polypeptide: Large ribosomal subunit protein uL6 (179 aa).

The protein belongs to the universal ribosomal protein uL6 family. As to quaternary structure, part of the 50S ribosomal subunit.

Its function is as follows. This protein binds to the 23S rRNA, and is important in its secondary structure. It is located near the subunit interface in the base of the L7/L12 stalk, and near the tRNA binding site of the peptidyltransferase center. The chain is Large ribosomal subunit protein uL6 from Parasynechococcus marenigrum (strain WH8102).